The chain runs to 739 residues: MTDFSLYLVTDPHLGGGPERVAGIVEDAINGGVTVVQLRDKDADEQTFREHAMELKRVCDRLGVPLFLNDRFAVAAELSCHVHIGQGDLPYVQARRQLPGHLMIGLTIETMDQLETVIADCTRAGIALPDVVGLGPVQATDTKPDAPQAVGVDGVAAMAKVARAHGIASVAIGGVGLANAADLARTGVDGLCVVSAIMAAPSPAEAARELLDVWEAGRRVAQPRVLTIAGTDPTGGAGVQADLKSIAAAGGFGMSVITALVAQNTHGVTGVHTPPADFLDEQLESVFSDVTVDAVKLGMLGRADTVRQVTGWLRTRPHGPVILDPVMVATSGDSLLDPDATEALLELATVVDVITPNIPELAVLCGEQPAPSFDAAIEQARRFATDVGTTVIVKGGHLTGPRADNAVVYPDGSVHMVANPRVDTTNSHGTGCSLSAALATRMGAGHPVDKALDWATRWLNEALRGADALQVGSGSGPVDHFAVTRRLLRAADATPWPHLRMGAPSDGIITPSDTQSPAPALAPAGPYTRALWEATGDVLGEILDSGFIRGLGDGTLSREEFLFYIDQDAHYLRQYSRALATLSSRAPDAPAQVDWATSAAECITVEAELHRTYLNKGLAETGVSAPSPVTMAYTDFLIARSHADDYVVGAAAVLPCYWLYAEIGLILAKQNHPEHPYTDWLDTYSGEGFLAGTVKAIARVEAAMAGAGPDQQRVAAQTYLSACVHEREFFDQATRQGWN.

Residues 1–210 (MTDFSLYLVT…PSPAEAAREL (210 aa)) are thiamine-phosphate synthase. 4-amino-2-methyl-5-(diphosphooxymethyl)pyrimidine-binding positions include 37–41 (QLRDK) and Asn-69. Residues Asp-70 and Asp-88 each contribute to the Mg(2+) site. Thr-107 is a binding site for 4-amino-2-methyl-5-(diphosphooxymethyl)pyrimidine. 140–142 (TDT) contacts 2-[(2R,5Z)-2-carboxy-4-methylthiazol-5(2H)-ylidene]ethyl phosphate. Position 143 (Lys-143) interacts with 4-amino-2-methyl-5-(diphosphooxymethyl)pyrimidine. Residues Gly-174 and 194-195 (VS) each bind 2-[(2R,5Z)-2-carboxy-4-methylthiazol-5(2H)-ylidene]ethyl phosphate. Positions 226-481 (LTIAGTDPTG…GSGSGPVDHF (256 aa)) are hydroxymethylpyrimidine/phosphomethylpyrimidine kinase. Gln-263 contacts 4-amino-5-hydroxymethyl-2-methylpyrimidine. The tract at residues 527–739 (YTRALWEATG…FDQATRQGWN (213 aa)) is thiaminase-2.

The protein in the N-terminal section; belongs to the thiamine-phosphate synthase family. In the central section; belongs to the ThiD family. This sequence in the C-terminal section; belongs to the thiaminase-2 family. The cofactor is Mg(2+).

The catalysed reaction is 2-[(2R,5Z)-2-carboxy-4-methylthiazol-5(2H)-ylidene]ethyl phosphate + 4-amino-2-methyl-5-(diphosphooxymethyl)pyrimidine + 2 H(+) = thiamine phosphate + CO2 + diphosphate. It catalyses the reaction 2-(2-carboxy-4-methylthiazol-5-yl)ethyl phosphate + 4-amino-2-methyl-5-(diphosphooxymethyl)pyrimidine + 2 H(+) = thiamine phosphate + CO2 + diphosphate. The enzyme catalyses 4-methyl-5-(2-phosphooxyethyl)-thiazole + 4-amino-2-methyl-5-(diphosphooxymethyl)pyrimidine + H(+) = thiamine phosphate + diphosphate. It carries out the reaction 4-amino-5-hydroxymethyl-2-methylpyrimidine + ATP = 4-amino-2-methyl-5-(phosphooxymethyl)pyrimidine + ADP + H(+). The catalysed reaction is 4-amino-2-methyl-5-(phosphooxymethyl)pyrimidine + ATP = 4-amino-2-methyl-5-(diphosphooxymethyl)pyrimidine + ADP. It functions in the pathway cofactor biosynthesis; thiamine diphosphate biosynthesis; 4-amino-2-methyl-5-diphosphomethylpyrimidine from 5-amino-1-(5-phospho-D-ribosyl)imidazole: step 3/3. The protein operates within cofactor biosynthesis; thiamine diphosphate biosynthesis; thiamine phosphate from 4-amino-2-methyl-5-diphosphomethylpyrimidine and 4-methyl-5-(2-phosphoethyl)-thiazole: step 1/1. Condenses 4-methyl-5-(beta-hydroxyethyl)thiazole monophosphate (THZ-P) and 2-methyl-4-amino-5-hydroxymethyl pyrimidine pyrophosphate (HMP-PP) to form thiamine monophosphate (TMP). Its function is as follows. Catalyzes the phosphorylation of hydroxymethylpyrimidine phosphate (HMP-P) to HMP-PP, and of HMP to HMP-P. The chain is Thiamine biosynthesis multifunctional protein ThiED (thiED) from Corynebacterium efficiens (strain DSM 44549 / YS-314 / AJ 12310 / JCM 11189 / NBRC 100395).